Reading from the N-terminus, the 309-residue chain is UDP-N-acetylenolpyruvoylglucosamine reductase (309 aa).

Residues 24-187 (RVGGPADWLF…TKAVFEAPRG (164 aa)) enclose the FAD-binding PCMH-type domain. Residue arginine 167 is part of the active site. Over residues 200–213 (LARRDATQPTKERS) the composition is skewed to basic and acidic residues. Residues 200-230 (LARRDATQPTKERSAGSTFRNPAGFSSTGRS) are disordered. Residues 214–228 (AGSTFRNPAGFSSTG) are compositionally biased toward polar residues. The active-site Proton donor is the serine 216. The active site involves glutamate 298.

Belongs to the MurB family. Requires FAD as cofactor.

The protein resides in the cytoplasm. It carries out the reaction UDP-N-acetyl-alpha-D-muramate + NADP(+) = UDP-N-acetyl-3-O-(1-carboxyvinyl)-alpha-D-glucosamine + NADPH + H(+). It functions in the pathway cell wall biogenesis; peptidoglycan biosynthesis. Cell wall formation. This Roseobacter denitrificans (strain ATCC 33942 / OCh 114) (Erythrobacter sp. (strain OCh 114)) protein is UDP-N-acetylenolpyruvoylglucosamine reductase.